We begin with the raw amino-acid sequence, 356 residues long: Histidinol-phosphate aminotransferase (356 aa).

An N6-(pyridoxal phosphate)lysine modification is found at Lys214.

It belongs to the class-II pyridoxal-phosphate-dependent aminotransferase family. Histidinol-phosphate aminotransferase subfamily. Homodimer. Requires pyridoxal 5'-phosphate as cofactor.

It catalyses the reaction L-histidinol phosphate + 2-oxoglutarate = 3-(imidazol-4-yl)-2-oxopropyl phosphate + L-glutamate. It participates in amino-acid biosynthesis; L-histidine biosynthesis; L-histidine from 5-phospho-alpha-D-ribose 1-diphosphate: step 7/9. The polypeptide is Histidinol-phosphate aminotransferase (Escherichia coli O9:H4 (strain HS)).